We begin with the raw amino-acid sequence, 156 residues long: Small ribosomal subunit protein uS7 (156 aa).

The protein belongs to the universal ribosomal protein uS7 family. Part of the 30S ribosomal subunit. Contacts proteins S9 and S11.

Its function is as follows. One of the primary rRNA binding proteins, it binds directly to 16S rRNA where it nucleates assembly of the head domain of the 30S subunit. Is located at the subunit interface close to the decoding center, probably blocks exit of the E-site tRNA. In Nitrobacter winogradskyi (strain ATCC 25391 / DSM 10237 / CIP 104748 / NCIMB 11846 / Nb-255), this protein is Small ribosomal subunit protein uS7.